The following is a 229-amino-acid chain: Prolactin (229 aa).

Residues 1 to 30 (MDSKGSSQKGSRLLLLLVVSNLLLCQGVVS) form the signal peptide. A disulfide bridge links cysteine 34 with cysteine 41. A phosphoserine mark is found at serine 56, serine 64, and serine 120. 2 disulfide bridges follow: cysteine 88–cysteine 204 and cysteine 221–cysteine 229.

It belongs to the somatotropin/prolactin family. In terms of assembly, interacts with PRLR.

The protein localises to the secreted. Its function is as follows. Prolactin acts primarily on the mammary gland by promoting lactation. The sequence is that of Prolactin (PRL) from Bos taurus (Bovine).